The following is a 578-amino-acid chain: Interleukin-10 receptor subunit alpha (578 aa).

The N-terminal stretch at 1-21 (MLPCLVVLLAALLSLRLGSDA) is a signal peptide. Residues 22-235 (HGTELPSPPS…LTRQYFTVTN (214 aa)) are Extracellular-facing. Residues N50, N74, N110, N154, N177, and N189 are each glycosylated (N-linked (GlcNAc...) asparagine). C56 and C75 form a disulfide bridge. C202 and C223 are oxidised to a cystine. A helical membrane pass occupies residues 236 to 256 (VIIFFAFVLLLSGALAYCLAL). Topologically, residues 257–578 (QLYVRRRKKL…PLISSLQSSE (322 aa)) are cytoplasmic. The disordered stretch occupies residues 313–436 (LHGSTDSGFG…PPEPEVPGEE (124 aa)). Residues 316–332 (STDSGFGSTKPSLQTEE) are compositionally biased toward polar residues. A BTRC recognition motif motif is present at residues 318–323 (DSGFGS). Low complexity predominate over residues 357–371 (GDSCSSGSSNSTDSG). A compositionally biased stretch (polar residues) spans 377 to 396 (PSLSPSTGPTWEQQVGSNSR).

This sequence belongs to the type II cytokine receptor family. In terms of assembly, interacts with IL10. Interacts with IL10RB. Interacts (via its cytoplasmic domain) with JAK1 (via N-terminus). Interacts with BTRC; this interaction leads to IL10RA ubiquitination and subsequent degradation. Interacts with STAT3. As to quaternary structure, (Microbial infection) Interacts with human cytomegalovirus protein IL10. (Microbial infection) Interacts with Epstein-Barr virus protein IL10. Phosphorylated. Phosphorylation of the cytoplasmic tail induced STAT3 activation. Post-translationally, ubiquitinated by BTRC; ubiquitination leads to endocytosis and subsequent degradation of IL10RA. Primarily expressed in hematopoetic cells including B-cells, T-cells, NK cells, monocytes and macrophages. Not expressed in non-hematopoetic cells such as fibroblasts or endothelial cells.

It localises to the cell membrane. It is found in the cytoplasm. Its function is as follows. Cell surface receptor for the cytokine IL10 that participates in IL10-mediated anti-inflammatory functions, limiting excessive tissue disruption caused by inflammation. Upon binding to IL10, induces a conformational change in IL10RB, allowing IL10RB to bind IL10 as well. In turn, the heterotetrameric assembly complex, composed of two subunits of IL10RA and IL10RB, activates the kinases JAK1 and TYK2 that are constitutively associated with IL10RA and IL10RB respectively. These kinases then phosphorylate specific tyrosine residues in the intracellular domain in IL10RA leading to the recruitment and subsequent phosphorylation of STAT3. Once phosphorylated, STAT3 homodimerizes, translocates to the nucleus and activates the expression of anti-inflammatory genes. In addition, IL10RA-mediated activation of STAT3 inhibits starvation-induced autophagy. This chain is Interleukin-10 receptor subunit alpha (IL10RA), found in Homo sapiens (Human).